Consider the following 614-residue polypeptide: High-affinity choline transporter 1 (614 aa).

Residues 6 to 26 form a helical membrane-spanning segment; it reads GVVSIVLFYLLILVVGIWAGR. The Cytoplasmic portion of the chain corresponds to 27–44; sequence KKQSGNDSEEEVMLAGRS. A helical membrane pass occupies residues 45 to 65; it reads IGLFVGIFTMTATWVGGGYIN. The Extracellular segment spans residues 66–75; it reads GTAEAIYTSG. A helical membrane pass occupies residues 76 to 96; that stretch reads LVWCQAPFGYALSLVFGGIFF. At 97-119 the chain is on the cytoplasmic side; the sequence is ANPMRKQGYITMLDPLQDSFGER. Residues 120 to 140 form a helical membrane-spanning segment; it reads MGGLLFLPALCGEVFWAAGIL. Residues 141–158 lie on the Extracellular side of the membrane; the sequence is AALGATLSVIIDMDHRTS. The helical transmembrane segment at 159 to 179 threads the bilayer; the sequence is VILSSCIAIFYTLFGGLYSVA. The Cytoplasmic segment spans residues 180–185; it reads YTDVIQ. The helical transmembrane segment at 186 to 206 threads the bilayer; the sequence is LFCIFIGLWMCIPFAWSNEHV. Topologically, residues 207–225 are extracellular; it reads GSLSDLEVDWIGHVEPKKH. Residues 226–246 traverse the membrane as a helical segment; sequence WLYIDYGLLLVFGGIPWQVYF. Topologically, residues 247–262 are cytoplasmic; the sequence is QRVLSSKTAGRAQLLS. A helical membrane pass occupies residues 263–283; that stretch reads YVAAAGCILMAIPPVLIGAIA. Residues 284–305 are Extracellular-facing; the sequence is KATPWNETDYKGPYPLTVDETS. A glycan (N-linked (GlcNAc...) asparagine) is linked at Asn289. Residues 306–326 traverse the membrane as a helical segment; it reads MILPMVLQYLTPDFVSFFGLG. The Cytoplasmic portion of the chain corresponds to 327–364; that stretch reads AVSAAVMSSADSSVLSAASMFARNVYKLIFRQKASEME. A helical transmembrane segment spans residues 365 to 385; the sequence is IIWVMRVAIIVVGILATIMAL. Over 386–394 the chain is Extracellular; the sequence is TIPSIYGLW. The chain crosses the membrane as a helical span at residues 395 to 415; it reads SMCSDLVYVILFPQLLMVVHF. At 416–424 the chain is on the cytoplasmic side; the sequence is KKHCNTYGS. Residues 425 to 445 traverse the membrane as a helical segment; it reads LSAYIVALAIRLSGGEAILGL. The Extracellular segment spans residues 446 to 467; that stretch reads APLIKYPGYDEETKEQMFPFRT. The helical transmembrane segment at 468 to 488 threads the bilayer; it reads MAMLLSLVTLISVSWWTKMMF. At 489-614 the chain is on the cytoplasmic side; that stretch reads ESGKLPPSYD…PTAEQDNTAF (126 aa). Positions 583–614 are disordered; that stretch reads ATGVKPSGGGGGHLQSQSGMAMPTAEQDNTAF.

It belongs to the sodium:solute symporter (SSF) (TC 2.A.21) family.

It is found in the membrane. Its function is as follows. Imports choline from the extracellular space to the neuron with high affinity. Rate-limiting step in acetylcholine synthesis. Sodium ion and chloride ion dependent. The sequence is that of High-affinity choline transporter 1 from Drosophila melanogaster (Fruit fly).